The following is a 177-amino-acid chain: Secretion monitor (177 aa).

An N-terminal signal peptide occupies residues M1 to G37.

Belongs to the SecM family.

It is found in the cytoplasm. The protein localises to the cytosol. Its subcellular location is the periplasm. Functionally, regulates secA expression by translational coupling of the secM secA operon. Translational pausing at a specific Pro residue 5 residues before the end of the protein may allow disruption of a mRNA repressor helix that normally suppresses secA translation initiation. The chain is Secretion monitor from Yersinia pseudotuberculosis serotype O:1b (strain IP 31758).